A 549-amino-acid polypeptide reads, in one-letter code: Biotin-dependent acetyl-/propionyl-coenzyme A carboxylase beta5 subunit (549 aa).

The CoA carboxyltransferase N-terminal domain occupies threonine 25–serine 281. Residues alanine 295 to lysine 542 form the CoA carboxyltransferase C-terminal domain.

It belongs to the AccD/PCCB family. As to quaternary structure, the biotin-dependent acyl-CoA carboxylase complex is composed of AccA3, which contains the biotin carboxylase (BC) and biotin carboxyl carrier protein (BCCP) domains, and AccD5, which contains the carboxyl transferase (CT) domain.

It catalyses the reaction N(6)-carboxybiotinyl-L-lysyl-[protein] + acetyl-CoA = N(6)-biotinyl-L-lysyl-[protein] + malonyl-CoA. It carries out the reaction N(6)-carboxybiotinyl-L-lysyl-[protein] + propanoyl-CoA = methylmalonyl-CoA + N(6)-biotinyl-L-lysyl-[protein]. Its pathway is lipid metabolism; mycolic acid biosynthesis. Functionally, component of a biotin-dependent acyl-CoA carboxylase complex. This subunit transfers the CO2 from carboxybiotin to the CoA ester substrate. When associated with the alpha3 subunit AccA3, is involved in the carboxylation of acetyl-CoA and propionyl-CoA. The sequence is that of Biotin-dependent acetyl-/propionyl-coenzyme A carboxylase beta5 subunit (accD5) from Mycobacterium leprae (strain TN).